The chain runs to 397 residues: Proteasome-activating nucleotidase (397 aa).

Positions 15 to 58 form a coiled coil; sequence DYVTFLKRRIRQLELQVRTLEADKERLERELSRLRMEMSRLRQP. ATP is bound by residues 182–187 and His-321; that span reads GCGKTL. A docks into pockets in the proteasome alpha-ring to cause gate opening region spans residues 395 to 397; that stretch reads MYG.

It belongs to the AAA ATPase family. Homohexamer. The hexameric complex has a two-ring architecture resembling a top hat that caps the 20S proteasome core at one or both ends. Upon ATP-binding, the C-terminus of PAN interacts with the alpha-rings of the proteasome core by binding to the intersubunit pockets.

It localises to the cytoplasm. In terms of biological role, ATPase which is responsible for recognizing, binding, unfolding and translocation of substrate proteins into the archaeal 20S proteasome core particle. Is essential for opening the gate of the 20S proteasome via an interaction with its C-terminus, thereby allowing substrate entry and access to the site of proteolysis. Thus, the C-termini of the proteasomal ATPase function like a 'key in a lock' to induce gate opening and therefore regulate proteolysis. Unfolding activity requires energy from ATP hydrolysis, whereas ATP binding alone promotes ATPase-20S proteasome association which triggers gate opening, and supports translocation of unfolded substrates. This Thermococcus kodakarensis (strain ATCC BAA-918 / JCM 12380 / KOD1) (Pyrococcus kodakaraensis (strain KOD1)) protein is Proteasome-activating nucleotidase.